The primary structure comprises 352 residues: Phosphatase Herzog (352 aa).

The tract at residues 1 to 102 (MDATSIITQV…PLPDQQRYLL (102 aa)) is prion-like domain necessary for both protein assembly and membrane targeting. The tract at residues 103–267 (PQVRLTDMHR…ELIPLFEKLS (165 aa)) is mediates substrate recognition. The 159-residue stretch at 108–266 (TDMHRKCMVI…RELIPLFEKL (159 aa)) folds into the FCP1 homology domain. Disordered regions lie at residues 284–310 (NNQT…LQQQ) and 332–352 (TMLN…LQKT).

As to quaternary structure, monomer. Forms higher-order protein aggregates with amyloid-like features during gastrulation. Interacts with babo, dah, Irk1, pch2, Ras64B, sax and Src64B.

The protein localises to the cell membrane. It catalyses the reaction O-phospho-L-seryl-[protein] + H2O = L-seryl-[protein] + phosphate. With respect to regulation, phosphatase activity requires amyloid-like aggregation on the membrane. In terms of biological role, prion-like membrane-associated phosphatase. Phosphatase activity depends on amyloid-like assembly at the membrane. Might have a role in establishment of segment polarity in embryos. The protein is Phosphatase Herzog of Drosophila melanogaster (Fruit fly).